Here is a 146-residue protein sequence, read N- to C-terminus: Vascular endothelial growth factor isoform GtVF (146 aa).

Positions 1–24 (MAAYLLAVAILFCIQGWPSGTVQG) are cleaved as a signal peptide. Gln25 is modified (pyrrolidone carboxylic acid). 3 disulfides stabilise this stretch: Cys38–Cys80, Cys69–Cys115, and Cys73–Cys117. The disordered stretch occupies residues 116 to 146 (ECRPRSRSGVDSGKRKRNPEEGEPRAKFPFV). Positions 133 to 146 (NPEEGEPRAKFPFV) are enriched in basic and acidic residues.

This sequence belongs to the PDGF/VEGF growth factor family. Snake venom VEGF subfamily. Homodimer; disulfide-linked. As to expression, expressed by the venom gland.

The protein resides in the secreted. Its function is as follows. Snake venom VEGFs that may contribute to venom dispersion and prey subjugation by inducing vascular permeability and hypotension. This protein induces an increase in capillary permeability after intradermal injection, in a VEGFR-2 (KDR) dependent manner. In addition, it provokes a drastic hypotensive effect after intravenous injection. The hypotension is mediated by nitric oxide (NO), which is produced by VEGF-activated endothelium NO synthase. Also induces angiogenesis in vitro. Unlike other crotalid VEGFs, this protein probably interacts with VEGF receptor-2 (KDR). The sequence is that of Vascular endothelial growth factor isoform GtVF from Gloydius tsushimaensis (Tsushima Island pitviper).